We begin with the raw amino-acid sequence, 216 residues long: Thiopurine S-methyltransferase (216 aa).

4 residues coordinate S-adenosyl-L-methionine: tryptophan 11, leucine 46, glutamate 67, and arginine 122.

Belongs to the class I-like SAM-binding methyltransferase superfamily. TPMT family.

It localises to the cytoplasm. The catalysed reaction is S-adenosyl-L-methionine + a thiopurine = S-adenosyl-L-homocysteine + a thiopurine S-methylether.. The protein is Thiopurine S-methyltransferase of Vibrio campbellii (strain ATCC BAA-1116).